Consider the following 182-residue polypeptide: Ribosome maturation factor RimM (182 aa).

The region spanning 103 to 182 (EDDYYWKDLM…RVEVDWDPGF (80 aa)) is the PRC barrel domain.

This sequence belongs to the RimM family. Binds ribosomal protein uS19.

Its subcellular location is the cytoplasm. An accessory protein needed during the final step in the assembly of 30S ribosomal subunit, possibly for assembly of the head region. Essential for efficient processing of 16S rRNA. May be needed both before and after RbfA during the maturation of 16S rRNA. It has affinity for free ribosomal 30S subunits but not for 70S ribosomes. The polypeptide is Ribosome maturation factor RimM (Yersinia pestis (strain Pestoides F)).